The chain runs to 402 residues: Protein FAM221B (402 aa).

The span at 1 to 35 (MEAHEIIEEPHITMDAEKHPPSKDPSAEDLQENHI) shows a compositional bias: basic and acidic residues. Disordered regions lie at residues 1-205 (MEAH…TARP) and 378-402 (DTQKTRQRGGRPRGTDTVSNWHRPL). Polar residues-rich tracts occupy residues 77-90 (EPSISETPSETPTY) and 393-402 (DTVSNWHRPL).

Belongs to the FAM221 family.

This Homo sapiens (Human) protein is Protein FAM221B (FAM221B).